Consider the following 355-residue polypeptide: Peptide chain release factor 1 (355 aa).

At Q233 the chain carries N5-methylglutamine. The segment covering 280-293 has biased composition (basic and acidic residues); that stretch reads ERRKKEQERADSRR. The interval 280 to 308 is disordered; it reads ERRKKEQERADSRRGQVGSGDRSERIRTY.

Belongs to the prokaryotic/mitochondrial release factor family. Post-translationally, methylated by PrmC. Methylation increases the termination efficiency of RF1.

The protein resides in the cytoplasm. Peptide chain release factor 1 directs the termination of translation in response to the peptide chain termination codons UAG and UAA. The chain is Peptide chain release factor 1 from Rickettsia felis (strain ATCC VR-1525 / URRWXCal2) (Rickettsia azadi).